The sequence spans 191 residues: MNPMPLSPLFFATWLAENEDQLRPPVNNYCLYQGNDFILMAVGGPNERNDYHVNETEVCLQPSWCSREANEQEWFYQVKGDMLLRVVENNAFRDIPIKEGEMFLLPGNTPHNPVRFKDTIGLVMERQRPAGSRDRLRWYCTKGDHASPTIIREEVFHCSDLGTQLKPIIEQWQQDEDGRRCAECSCIADPK.

An O2-binding site is contributed by Arg48. Fe cation-binding residues include His52, Glu73, and His111. Residue Glu73 participates in substrate binding. Residues Arg115 and Glu125 each coordinate substrate.

This sequence belongs to the 3-HAO family. The cofactor is Fe(2+).

It is found in the cytoplasm. It carries out the reaction 3-hydroxyanthranilate + O2 = (2Z,4Z)-2-amino-3-carboxymuconate 6-semialdehyde. The protein operates within cofactor biosynthesis; NAD(+) biosynthesis; quinolinate from L-kynurenine: step 3/3. Functionally, catalyzes the oxidative ring opening of 3-hydroxyanthranilate to 2-amino-3-carboxymuconate semialdehyde, which spontaneously cyclizes to quinolinate. This is 3-hydroxyanthranilate 3,4-dioxygenase 2 (bna1-2) from Aspergillus clavatus (strain ATCC 1007 / CBS 513.65 / DSM 816 / NCTC 3887 / NRRL 1 / QM 1276 / 107).